A 314-amino-acid polypeptide reads, in one-letter code: Homoserine kinase (314 aa).

96–106 is a binding site for ATP; it reads PIGSGLGSSAC.

The protein belongs to the GHMP kinase family. Homoserine kinase subfamily.

It is found in the cytoplasm. The catalysed reaction is L-homoserine + ATP = O-phospho-L-homoserine + ADP + H(+). Its pathway is amino-acid biosynthesis; L-threonine biosynthesis; L-threonine from L-aspartate: step 4/5. Functionally, catalyzes the ATP-dependent phosphorylation of L-homoserine to L-homoserine phosphate. This is Homoserine kinase from Histophilus somni (strain 129Pt) (Haemophilus somnus).